The following is a 107-amino-acid chain: L-rhamnose mutarotase (107 aa).

Position 21 (Tyr21) interacts with substrate. His25 acts as the Proton donor in catalysis. Residues Tyr44 and 79–80 (WW) contribute to the substrate site. The disordered stretch occupies residues 88-107 (ETNPDNSPKTNSLKEVFHLD). Residues 90-100 (NPDNSPKTNSL) show a composition bias toward polar residues.

The protein belongs to the rhamnose mutarotase family. In terms of assembly, homodimer.

The protein localises to the cytoplasm. The enzyme catalyses alpha-L-rhamnose = beta-L-rhamnose. It functions in the pathway carbohydrate metabolism; L-rhamnose metabolism. Its function is as follows. Involved in the anomeric conversion of L-rhamnose. This is L-rhamnose mutarotase from Flavobacterium johnsoniae (strain ATCC 17061 / DSM 2064 / JCM 8514 / BCRC 14874 / CCUG 350202 / NBRC 14942 / NCIMB 11054 / UW101) (Cytophaga johnsonae).